A 555-amino-acid polypeptide reads, in one-letter code: Luciferin 2-monooxygenase (555 aa).

Residues 1 to 11 (MKIIILSVILA) form the signal peptide. 2 consecutive VWFD domains span residues 80–266 (IECR…EYCK) and 319–494 (GTCV…RLCN). Intrachain disulfides connect Cys-82–Cys-222, Cys-321–Cys-454, Cys-343–Cys-493, and Cys-352–Cys-451. Asn-186 and Asn-408 each carry an N-linked (GlcNAc...) asparagine glycan.

The cysteine residues presumably exist in intramolecular disulfide bridges. Post-translationally, the N-terminus is blocked.

It carries out the reaction Cypridina luciferin + O2 = oxidized Cypridina luciferin + hnu + CO2. The polypeptide is Luciferin 2-monooxygenase (Vargula hilgendorfii (Sea firefly)).